Reading from the N-terminus, the 506-residue chain is AMP phosphorylase (506 aa).

AMP contacts are provided by residues glycine 167, 193 to 198 (SRAITG), and threonine 202. The active-site Proton donor is the aspartate 255. The AMP site is built by serine 263 and lysine 287.

The protein belongs to the thymidine/pyrimidine-nucleoside phosphorylase family. Type 2 subfamily.

It catalyses the reaction AMP + phosphate = alpha-D-ribose 1,5-bisphosphate + adenine. The catalysed reaction is CMP + phosphate = cytosine + alpha-D-ribose 1,5-bisphosphate. It carries out the reaction UMP + phosphate = alpha-D-ribose 1,5-bisphosphate + uracil. Functionally, catalyzes the conversion of AMP and phosphate to adenine and ribose 1,5-bisphosphate (R15P). Exhibits phosphorylase activity toward CMP and UMP in addition to AMP. Functions in an archaeal AMP degradation pathway, together with R15P isomerase and RubisCO. In Methanosarcina barkeri (strain Fusaro / DSM 804), this protein is AMP phosphorylase.